Here is a 197-residue protein sequence, read N- to C-terminus: Lipoprotein LprI (197 aa).

An N-terminal signal peptide occupies residues 1–15 (MRWIGVLVTALVLSA). A lipid anchor (N-palmitoyl cysteine) is attached at C16. The S-diacylglycerol cysteine moiety is linked to residue C16.

In the C-terminal section; belongs to the MliC family. As to quaternary structure, probably a homodimer. Post-translationally, glycosylated.

The protein localises to the cell membrane. The protein resides in the secreted. It is found in the cell wall. It localises to the cell surface. Functionally, strongly binds and inhibits lysozyme, may help bacteria survive in lysozyme-producing host cells such as monocyte-derived macrophages. The sequence is that of Lipoprotein LprI (lprI) from Mycobacterium bovis (strain ATCC BAA-935 / AF2122/97).